A 559-amino-acid polypeptide reads, in one-letter code: MKVITCEIAWHNKEPVYSLDFQHGTAGRIHRLASAGVDTNVRIWKVEKGPDGKAIVEFLSNLARHTKAVNVVRFSPTGEILASGGDDAVILLWKVNDNKEPEQIAFQDEDEAQLNKENWTVVKTLRGHLEDVYDICWATDGNLMASASVDNTAIIWDVSKGQKISIFNEHKSYVQGVTWDPLGQYVATLSCDRVLRVYSIQKKRVAFNVSKMLSGIGAEGEARSYRMFHDDSMKSFFRRLSFTPDGSLLLTPAGCVESGENVMNTTYVFSRKNLKRPIAHLPCPGKATLAVRCCPVYFELRPVVETGVELMSLPYRLVFAVASEDSVLLYDTQQSFPFGYVSNIHYHTLSDISWSSDGAFLAISSTDGYCSFVTFEKDELGIPLKEKPVLNMRTPDTAKKTKSQTHRGSSPGPRPVEGTPASRTQDPSSPGTTPPQARQAPAPTVIRDPPSITPAVKSPLPGPSEEKTLQPSSQNTKAHPSRRVTLNTLQAWSKTTPRRINLTPLKTDTPPSSVPTSVISTPSTEEIQSETPGDAQGSPPELKRPRLDENKGGTESLDP.

WD repeat units lie at residues His-11 to Ala-54, Arg-64 to Gln-103, Gly-127 to Ile-166, Glu-169 to Asn-208, Phe-228 to Ala-279, Glu-299 to Tyr-340, and Ile-344 to Lys-385. The disordered stretch occupies residues Glu-386 to Pro-559. Thr-394 is subject to Phosphothreonine. Ser-409 bears the Phosphoserine mark. Thr-419 is modified (phosphothreonine). At Ser-429 the chain carries Phosphoserine. Positions Pro-430 to Thr-444 are enriched in low complexity. The residue at position 433 (Thr-433) is a Phosphothreonine. Ser-458 carries the phosphoserine modification. Polar residues predominate over residues Leu-469–Thr-495. An N6-acetyllysine modification is found at Lys-494. A phosphothreonine mark is found at Thr-495, Thr-509, Thr-521, and Thr-531. A compositionally biased stretch (low complexity) spans Thr-509–Glu-526. A Phosphoserine modification is found at Ser-538. Residues Glu-541 to Gly-552 are compositionally biased toward basic and acidic residues.

The protein belongs to the WD repeat HIR1 family. As to quaternary structure, subunit of the CAF-1 complex that contains RBBP4, CHAF1B and CHAF1A. CHAF1A binds directly to CHAF1B. Only minor amounts of RBBP4 are complexed with CHAF1A and CHAF1B in G1 phase. In G2 and S phase also monomeric CHAF1B is detected. Interacts with histones H3.1, H3.2 and H3.1t. Differentially phosphorylated during cell cycle. During mitosis the p60 subunit of inactive CAF-1 is hyperphosphorylated and displaced into the cytosol. Progressivly dephosphorylated from G1 to S and G2 phase. Phosphorylated p60 is recruited to chromatin undergoing DNA repair after UV irradiation in G1, S or G2 phases.

It localises to the nucleus. The protein resides in the cytoplasm. Its function is as follows. Acts as a component of the histone chaperone complex chromatin assembly factor 1 (CAF-1), which assembles histone octamers onto DNA during replication and repair. CAF-1 performs the first step of the nucleosome assembly process, bringing newly synthesized histones H3 and H4 to replicating DNA; histones H2A/H2B can bind to this chromatin precursor subsequent to DNA replication to complete the histone octamer. In Homo sapiens (Human), this protein is Chromatin assembly factor 1 subunit B.